The sequence spans 391 residues: Zinc finger protein ubi-d4 (391 aa).

At A2 the chain carries N-acetylalanine. Residues K10, K99, K107, and K108 each participate in a glycyl lysine isopeptide (Lys-Gly) (interchain with G-Cter in SUMO2) cross-link. 2 disordered regions span residues 79–147 (WRKK…GEFP) and 165–199 (DDLD…KLDA). 2 stretches are compositionally biased toward basic and acidic residues: residues 100 to 110 (PDTDQTLKKEG) and 126 to 140 (DPLE…RVDD). Phosphoserine is present on S142. Residues 165 to 174 (DDLDDEDYEE) show a composition bias toward acidic residues. Residue Y172 is modified to Phosphotyrosine. Position 176 is a phosphothreonine (T176). Glycyl lysine isopeptide (Lys-Gly) (interchain with G-Cter in SUMO2) cross-links involve residues K178 and K196. S200 is modified (phosphoserine). Residues 209-232 (YACDICGKRYKNRPGLSYHYAHSH) form a C2H2-type zinc finger. The interval 233 to 266 (LAEEEGEDKEDSRPPTPVSQRSEEQKSKKGPDGL) is disordered. S244 is subject to Phosphoserine. Over residues 253-263 (RSEEQKSKKGP) the composition is skewed to basic and acidic residues. 2 PHD-type zinc fingers span residues 270–330 (NNYC…CKCC) and 327–377 (CKCC…CLDL). S280 carries the phosphoserine modification. K281 participates in a covalent cross-link: Glycyl lysine isopeptide (Lys-Gly) (interchain with G-Cter in SUMO2).

The protein belongs to the requiem/DPF family. As to quaternary structure, interacts with the nucleosomes, in particular nucleosomes bearing histone H3 crotonylated at 'Lys-14' (H3K14cr) for which DPF2 has high affinity. Also interacts (via PHD-type zinc finger domains) with histone H3 butyrylated at 'Lys-14' (H3K14bu), histone H3 propionylated at 'Lys-14' (H3K14pr), and histone H3 acetylated at 'Lys-14' (H3K14ac). Interacts with histone H3 acetylated at 'Lys-9' (H3K9ac), histone H3 di-methylated at 'Lys-9' (H3K9me2), and histone H3 tri-methylated at 'Lys-9' (H3K9me3). Interacts with histone H4 acetylated at 'Lys-12' (H4K12ac). Interacts with histone H4 acetylated at 'Lys-16' (H4K16ac). Interacts with SWI/SNF complex components. Interacts with SMARCA2, SMARCA4, SMARCB1 and SMARCD1. Interacts with SMARCC1, SMARCC2 and ACTL6A. Interacts with RUNX1. In terms of tissue distribution, in embryo, highest levels are seen in brain, eyes, thymus and olfactory epithelium in nose, whereas several other tissues, including the musculoskeletal system, show moderate expression. In adult, higher expression in testis, medium in thymus and spleen, lower in certain parts of the brain as the hippocampus. No expression in adult heart, lung, liver, duodenum and kidney.

The protein localises to the nucleus. It is found in the cytoplasm. In terms of biological role, plays an active role in transcriptional regulation by binding modified histones H3 and H4. Is a negative regulator of myeloid differentiation of hematopoietic progenitor cells. Might also have a role in the development and maturation of lymphoid cells. Involved in the regulation of non-canonical NF-kappa-B pathway. The chain is Zinc finger protein ubi-d4 (Dpf2) from Mus musculus (Mouse).